The primary structure comprises 333 residues: DNA-directed RNA polymerase subunit alpha (333 aa).

The segment at 1–233 is alpha N-terminal domain (alpha-NTD); it reads MVQEKLRFST…DLFIPFLHAE (233 aa). An alpha C-terminal domain (alpha-CTD) region spans residues 266 to 333; that stretch reads KKEIALKSIF…DILKIQKYFT (68 aa).

The protein belongs to the RNA polymerase alpha chain family. As to quaternary structure, in plastids the minimal PEP RNA polymerase catalytic core is composed of four subunits: alpha, beta, beta', and beta''. When a (nuclear-encoded) sigma factor is associated with the core the holoenzyme is formed, which can initiate transcription.

The protein localises to the plastid. Its subcellular location is the chloroplast. The catalysed reaction is RNA(n) + a ribonucleoside 5'-triphosphate = RNA(n+1) + diphosphate. In terms of biological role, DNA-dependent RNA polymerase catalyzes the transcription of DNA into RNA using the four ribonucleoside triphosphates as substrates. The protein is DNA-directed RNA polymerase subunit alpha of Phaseolus angularis (Azuki bean).